We begin with the raw amino-acid sequence, 297 residues long: UTP--glucose-1-phosphate uridylyltransferase (297 aa).

This sequence belongs to the UDPGP type 2 family.

It carries out the reaction alpha-D-glucose 1-phosphate + UTP + H(+) = UDP-alpha-D-glucose + diphosphate. The protein operates within carbohydrate metabolism; nucleotide-sugar metabolism. It functions in the pathway bacterial outer membrane biogenesis; lipopolysaccharide biosynthesis. The protein is UTP--glucose-1-phosphate uridylyltransferase (galF) of Escherichia coli O157:H7.